The following is a 210-amino-acid chain: Large ribosomal subunit protein uL5 (210 aa).

Positions 188–210 (AKDDPKKAKTKRGPAYYAKKKKK) are disordered. A compositionally biased stretch (basic residues) spans 195-210 (AKTKRGPAYYAKKKKK).

Belongs to the universal ribosomal protein uL5 family. Part of the 50S ribosomal subunit; part of the 5S rRNA/L5/L18/L25 subcomplex. Contacts the 5S rRNA and the P site tRNA. Forms a bridge to the 30S subunit in the 70S ribosome.

Functionally, this is one of the proteins that bind and probably mediate the attachment of the 5S RNA into the large ribosomal subunit, where it forms part of the central protuberance. In the 70S ribosome it contacts protein S13 of the 30S subunit (bridge B1b), connecting the 2 subunits; this bridge is implicated in subunit movement. Contacts the P site tRNA; the 5S rRNA and some of its associated proteins might help stabilize positioning of ribosome-bound tRNAs. The chain is Large ribosomal subunit protein uL5 from Cutibacterium acnes (strain DSM 16379 / KPA171202) (Propionibacterium acnes).